Here is a 250-residue protein sequence, read N- to C-terminus: AA9 family lytic polysaccharide monooxygenase AA17 (250 aa).

An N-terminal signal peptide occupies residues 1 to 21; it reads MAMSKIVSLTGLLASASLVAG. Positions 22 and 107 each coordinate Cu(2+). 2 disulfide bridges follow: cysteine 77-cysteine 199 and cysteine 118-cysteine 122. Residue asparagine 159 is glycosylated (N-linked (GlcNAc...) asparagine). O2 contacts are provided by histidine 185 and glutamine 194. Cu(2+) is bound at residue tyrosine 196.

Belongs to the polysaccharide monooxygenase AA9 family. It depends on Cu(2+) as a cofactor.

Its subcellular location is the secreted. Lytic polysaccharide monooxygenase (LPMO) that exhibits oxidative cleavage beta-O-4 linkage of lignin resulting in the formation of aromatic compound guaiacol. Catalysis by LPMOs requires the reduction of the active-site copper from Cu(II) to Cu(I) by a reducing agent and H(2)O(2) or O(2) as a cosubstrate. Does not use cellulose, cello-oligosaccharides, xyloglucan, xylan, chitin nor starch as substrates. Able to depolymerize the lignin dimer guaicyl glycerol beta-guaicyl ether (GGE). The polypeptide is AA9 family lytic polysaccharide monooxygenase AA17 (Aspergillus oryzae (strain ATCC 42149 / RIB 40) (Yellow koji mold)).